Reading from the N-terminus, the 827-residue chain is Beta-galactosidase 2 (827 aa).

Positions 1-24 (MAASAVAVAFVVAVAAVLAAAASA) are cleaved as a signal peptide. The Proton donor role is filled by E182. N209 carries N-linked (GlcNAc...) asparagine glycosylation. The active-site Nucleophile is E251. N458 carries an N-linked (GlcNAc...) asparagine glycan. The SUEL-type lectin domain occupies 741–827 (DYEKAKVHLQ…KRAVVEAICG (87 aa)).

The protein belongs to the glycosyl hydrolase 35 family.

Its subcellular location is the secreted. The protein localises to the extracellular space. The protein resides in the apoplast. The enzyme catalyses Hydrolysis of terminal non-reducing beta-D-galactose residues in beta-D-galactosides.. This is Beta-galactosidase 2 from Oryza sativa subsp. japonica (Rice).